A 394-amino-acid polypeptide reads, in one-letter code: Elongation factor Tu 2 (394 aa).

One can recognise a tr-type G domain in the interval 10 to 204 (KPHVNVGTIG…ALDSYIPEPE (195 aa)). Residues 19-26 (GHVDHGKT) are G1. 19-26 (GHVDHGKT) is a binding site for GTP. Thr26 contacts Mg(2+). The interval 60–64 (GITIS) is G2. The segment at 81-84 (DCPG) is G3. GTP contacts are provided by residues 81–85 (DCPGH) and 136–139 (NKCD). The tract at residues 136 to 139 (NKCD) is G4. Positions 174–176 (SAL) are G5.

Belongs to the TRAFAC class translation factor GTPase superfamily. Classic translation factor GTPase family. EF-Tu/EF-1A subfamily. In terms of assembly, monomer.

It localises to the cytoplasm. The enzyme catalyses GTP + H2O = GDP + phosphate + H(+). GTP hydrolase that promotes the GTP-dependent binding of aminoacyl-tRNA to the A-site of ribosomes during protein biosynthesis. In Pseudoalteromonas translucida (strain TAC 125), this protein is Elongation factor Tu 2.